The primary structure comprises 240 residues: Uridylate kinase (240 aa).

Position 12-15 (12-15 (KLSG)) interacts with ATP. The segment at 20-25 (GEKGFG) is involved in allosteric activation by GTP. Residue Gly-54 participates in UMP binding. ATP is bound by residues Gly-55 and Arg-59. UMP-binding positions include Asp-74 and 135–142 (TGSPYFST). Residues Asn-163, Tyr-169, and Asp-172 each coordinate ATP.

Belongs to the UMP kinase family. In terms of assembly, homohexamer.

The protein resides in the cytoplasm. The enzyme catalyses UMP + ATP = UDP + ADP. Its pathway is pyrimidine metabolism; CTP biosynthesis via de novo pathway; UDP from UMP (UMPK route): step 1/1. Its activity is regulated as follows. Allosterically activated by GTP. Inhibited by UTP. Catalyzes the reversible phosphorylation of UMP to UDP. The protein is Uridylate kinase of Lactiplantibacillus plantarum (strain ATCC BAA-793 / NCIMB 8826 / WCFS1) (Lactobacillus plantarum).